The chain runs to 56 residues: Protein hunchback (56 aa).

3 C2H2-type zinc fingers span residues 1-5 (HLRNH), 11-33 (FRCD…LKSH), and 39-56 (YRCA…SLKL).

The protein belongs to the hunchback C2H2-type zinc-finger protein family.

The protein localises to the nucleus. Its function is as follows. Gap class segmentation protein that controls development of head structures. The chain is Protein hunchback (hb) from Locusta migratoria (Migratory locust).